Reading from the N-terminus, the 698-residue chain is Phenylalanine aminomutase (L-beta-phenylalanine forming) (698 aa).

The active-site Proton donor/acceptor is tyrosine 80. The segment at residues 175-177 (ASG) is a cross-link (5-imidazolinone (Ala-Gly)). 2,3-didehydroalanine (Ser) is present on serine 176. (E)-cinnamate contacts are provided by asparagine 231, glutamine 319, arginine 325, asparagine 355, lysine 427, glutamate 455, and asparagine 458.

Belongs to the PAL/histidase family. In terms of assembly, homotetramer. Contains an active site 4-methylidene-imidazol-5-one (MIO), which is formed autocatalytically by cyclization and dehydration of residues Ala-Ser-Gly.

Its subcellular location is the cytoplasm. The enzyme catalyses L-phenylalanine = L-beta-phenylalanine. The catalysed reaction is L-phenylalanine = (E)-cinnamate + NH4(+). It functions in the pathway alkaloid biosynthesis; taxol biosynthesis. It participates in phenylpropanoid metabolism; trans-cinnamate biosynthesis; trans-cinnamate from L-phenylalanine: step 1/1. Phenylalanine aminomutase that catalyzes the rearrangement of L-phenylalanine to R-beta-phenylalanine. Catalyzes the first committed step in the biosynthesis of the side chain of the alkaloid taxol (paclitaxel), a widely-used compound with antitumor activity. Also has low phenylalanine ammonia-lyase activity. The polypeptide is Phenylalanine aminomutase (L-beta-phenylalanine forming) (pam) (Taxus canadensis (Canadian yew)).